Consider the following 967-residue polypeptide: Cytosolic carboxypeptidase 2 (967 aa).

In terms of domain architecture, Peptidase M14 spans 330 to 601 (YPYTYSDLQR…HFCDTLLDYC (272 aa)). His396, Glu399, and His492 together coordinate Zn(2+). Catalysis depends on Glu565, which acts as the Proton donor/acceptor. Disordered regions lie at residues 679 to 706 (KRRL…LHEA) and 944 to 967 (PGIS…NTMK). Residues 946 to 967 (ISSSEPHFPNSSEDITVRNTMK) show a composition bias toward polar residues.

Belongs to the peptidase M14 family. The cofactor is Zn(2+).

It is found in the cytoplasm. Its subcellular location is the cytosol. It localises to the cytoskeleton. The protein resides in the microtubule organizing center. The protein localises to the centrosome. It is found in the centriole. Its subcellular location is the cilium basal body. It carries out the reaction (L-glutamyl)(n+1)-gamma-L-glutamyl-L-glutamyl-[protein] + H2O = (L-glutamyl)(n)-gamma-L-glutamyl-L-glutamyl-[protein] + L-glutamate. Functionally, metallocarboxypeptidase that mediates deglutamylation of target proteins. Catalyzes the deglutamylation of polyglutamate side chains generated by post-translational polyglutamylation in proteins such as tubulins. Also removes gene-encoded polyglutamates from the carboxy-terminus of target proteins such as MYLK. Does not show detyrosinase or deglycylase activities from the carboxy-terminus of tubulin. In terms of biological role, metallocarboxypeptidase that mediates deglutamylation of tubulin and non-tubulin target proteins. Catalyzes the removal of polyglutamate side chains present on the gamma-carboxyl group of glutamate residues within the C-terminal tail of tubulin protein. Specifically cleaves tubulin long-side-chains, while it is not able to remove the branching point glutamate. Also catalyzes the removal of polyglutamate residues from the carboxy-terminus of non-tubulin proteins. The protein is Cytosolic carboxypeptidase 2 (agbl2) of Xenopus tropicalis (Western clawed frog).